The sequence spans 448 residues: Integrator complex subunit 15 (448 aa).

This sequence belongs to the Integrator subunit 15 family. Component of the Integrator complex, composed of core subunits INTS1, INTS2, INTS3, INTS4, INTS5, INTS6, INTS7, INTS8, INTS9/RC74, INTS10, INTS11/CPSF3L, INTS12, INTS13, INTS14 and INTS15. The core complex associates with protein phosphatase 2A subunits PPP2CA and PPP2R1A, to form the Integrator-PP2A (INTAC) complex. INTS15 is part of the tail subcomplex, composed of INTS10, INTS13, INTS14 and INTS15.

It localises to the nucleus. It is found in the chromosome. Functionally, component of the integrator complex, a multiprotein complex that terminates RNA polymerase II (Pol II) transcription in the promoter-proximal region of genes. The integrator complex provides a quality checkpoint during transcription elongation by driving premature transcription termination of transcripts that are unfavorably configured for transcriptional elongation: the complex terminates transcription by (1) catalyzing dephosphorylation of the C-terminal domain (CTD) of Pol II subunit POLR2A/RPB1 and SUPT5H/SPT5, (2) degrading the exiting nascent RNA transcript via endonuclease activity and (3) promoting the release of Pol II from bound DNA. The integrator complex is also involved in terminating the synthesis of non-coding Pol II transcripts, such as enhancer RNAs (eRNAs), small nuclear RNAs (snRNAs), telomerase RNAs and long non-coding RNAs (lncRNAs). INTS15 is part of the integrator tail module that acts as a platform for the recruitment of transcription factors at promoters. Within the integrator complex, INTS15 is required to bridge different integrator modules. This is Integrator complex subunit 15 from Mus musculus (Mouse).